The chain runs to 124 residues: Protein TAR1 (124 aa).

Residues 80–124 (KNRTPRHTGFSPSMTSCSKEHRQGTAPKLPSPNYNSGTEGTRFQI) form a disordered region. A compositionally biased stretch (polar residues) spans 111-124 (PNYNSGTEGTRFQI).

Its subcellular location is the mitochondrion. Its function is as follows. May be involved in mtDNA stability or mitochondrial gene expression regulation at the post-transcriptional level. This Saccharomyces cerevisiae (strain ATCC 204508 / S288c) (Baker's yeast) protein is Protein TAR1 (TAR1).